A 185-amino-acid chain; its full sequence is Segregation and condensation protein B (185 aa).

Belongs to the ScpB family. In terms of assembly, homodimer. Homodimerization may be required to stabilize the binding of ScpA to the Smc head domains. Component of a cohesin-like complex composed of ScpA, ScpB and the Smc homodimer, in which ScpA and ScpB bind to the head domain of Smc. The presence of the three proteins is required for the association of the complex with DNA.

Its subcellular location is the cytoplasm. Its function is as follows. Participates in chromosomal partition during cell division. May act via the formation of a condensin-like complex containing Smc and ScpA that pull DNA away from mid-cell into both cell halves. The protein is Segregation and condensation protein B of Carboxydothermus hydrogenoformans (strain ATCC BAA-161 / DSM 6008 / Z-2901).